Here is a 95-residue protein sequence, read N- to C-terminus: Cell division topological specificity factor (95 aa).

It belongs to the MinE family.

Prevents the cell division inhibition by proteins MinC and MinD at internal division sites while permitting inhibition at polar sites. This ensures cell division at the proper site by restricting the formation of a division septum at the midpoint of the long axis of the cell. The sequence is that of Cell division topological specificity factor from Psychrobacter cryohalolentis (strain ATCC BAA-1226 / DSM 17306 / VKM B-2378 / K5).